Consider the following 378-residue polypeptide: Response regulator aspartate phosphatase A (378 aa).

TPR repeat units follow at residues 101-137 (YYFNFFRGMYEFKQKMFVSAMMYYKRAEKNLALVSDD), 148-181 (AEIFYNLKQTYVSMSYAVQALETYQMYETYTVRR), 183-215 (QCEFVIAGNYDDMQYPERALPHLELALDLAKKE), 222-255 (SSALYNLGNCYEKMGELQKAAEYFGKSVSICKSE), 261-294 (PHSIYSLTQVLYKQKNDAEAQKKYREGLEIARQY), and 336-369 (EELAHDAAQFYIENGQPEKALSFYEKMVHAQKQI).

It belongs to the Rap family. As to quaternary structure, homodimer. Interacts with its substrate, phosphorylated Spo0F, and its inhibitor, the PhrA pentapeptide. The RapA dimer forms a stable complex with two molecules of phosphorylated Spo0F. The complex is dissociated after dephosphorylation of Spo0F by RapA. Mn(2+) serves as cofactor.

It localises to the cytoplasm. Phosphatase activity is inhibited by the phosphatase regulator PhrA. Interaction with PhrA dissociates the RapA-Spo0F complex. Activity is abolished in the presence of EDTA. Involved in the regulation of sporulation. Acts as a phosphatase that specifically dephosphorylates the sporulation initiation phosphotransferase Spo0F and inhibits its activity. The sequence is that of Response regulator aspartate phosphatase A from Bacillus subtilis (strain 168).